Here is a 726-residue protein sequence, read N- to C-terminus: Catalase-peroxidase (726 aa).

Residues 93-216 (WHSAGTYRVH…LAAVQMGLIY (124 aa)) constitute a cross-link (tryptophyl-tyrosyl-methioninium (Trp-Tyr) (with M-242)). Residue H94 is the Proton acceptor of the active site. The tryptophyl-tyrosyl-methioninium (Tyr-Met) (with W-93) cross-link spans 216-242 (YVNPEGPNGNPDPVAAAVDIRETFTRM). Residue H257 participates in heme b binding. The disordered stretch occupies residues 471–490 (GSDKRGGANGARIRLSPQKD).

It belongs to the peroxidase family. Peroxidase/catalase subfamily. In terms of assembly, homodimer or homotetramer. The cofactor is heme b. In terms of processing, formation of the three residue Trp-Tyr-Met cross-link is important for the catalase, but not the peroxidase activity of the enzyme.

The catalysed reaction is H2O2 + AH2 = A + 2 H2O. It carries out the reaction 2 H2O2 = O2 + 2 H2O. Bifunctional enzyme with both catalase and broad-spectrum peroxidase activity. This Methylacidiphilum infernorum (isolate V4) (Methylokorus infernorum (strain V4)) protein is Catalase-peroxidase.